Consider the following 95-residue polypeptide: Integration host factor subunit beta (95 aa).

It belongs to the bacterial histone-like protein family. In terms of assembly, heterodimer of an alpha and a beta chain.

In terms of biological role, this protein is one of the two subunits of integration host factor, a specific DNA-binding protein that functions in genetic recombination as well as in transcriptional and translational control. The protein is Integration host factor subunit beta of Shewanella sp. (strain ANA-3).